Consider the following 346-residue polypeptide: MHVISLSLSSIFFFLFLTSTILISPVQPTTSKPPAPRPHRELSADYYSKKCPQLETLVGSVTSQRFKEVPISAPATIRLFFHDCFVEGCDGSILIETKKGSKKLAEREAYENKELREEGFDSIIKAKALVESHCPSLVSCSDILAIAARDFIHLAGGPYYQVKKGRWDGKRSTAKNVPPNIPRSNSTVDQLIKLFASKGLTVEELVVLSGSHTIGFAHCKNFLGRLYDYKGTKRPDPSLDQRLLKELRMSCPFSGGSSGVVLPLDATTPFVFDNGYFTGLGTNMGLLGSDQALFLDPRTKPIALEMARDKQKFLKAFGDAMDKMGSIGVKRGKRHGEIRTDCRVFL.

A signal peptide spans 1-31 (MHVISLSLSSIFFFLFLTSTILISPVQPTTS). 4 disulfides stabilise this stretch: Cys51–Cys134, Cys84–Cys89, Cys140–Cys342, and Cys219–Cys251. His82 functions as the Proton acceptor in the catalytic mechanism. Ca(2+) is bound by residues Asp83, Val86, Gly88, Asp90, and Ser92. Pro182 contributes to the substrate binding site. N-linked (GlcNAc...) asparagine glycosylation is present at Asn185. His212 lines the heme b pocket. Thr213 provides a ligand contact to Ca(2+). Positions 265, 268, and 273 each coordinate Ca(2+).

Belongs to the peroxidase family. Classical plant (class III) peroxidase subfamily. It depends on heme b as a cofactor. Ca(2+) is required as a cofactor.

Its subcellular location is the secreted. It catalyses the reaction 2 a phenolic donor + H2O2 = 2 a phenolic radical donor + 2 H2O. Functionally, removal of H(2)O(2), oxidation of toxic reductants, biosynthesis and degradation of lignin, suberization, auxin catabolism, response to environmental stresses such as wounding, pathogen attack and oxidative stress. These functions might be dependent on each isozyme/isoform in each plant tissue. This is Peroxidase 19 (PER19) from Arabidopsis thaliana (Mouse-ear cress).